The primary structure comprises 298 residues: Elongation factor Ts (298 aa).

Residues 80–83 (TDFV) are involved in Mg(2+) ion dislocation from EF-Tu.

Belongs to the EF-Ts family.

It is found in the cytoplasm. Functionally, associates with the EF-Tu.GDP complex and induces the exchange of GDP to GTP. It remains bound to the aminoacyl-tRNA.EF-Tu.GTP complex up to the GTP hydrolysis stage on the ribosome. This Paracidovorax citrulli (strain AAC00-1) (Acidovorax citrulli) protein is Elongation factor Ts.